Here is a 508-residue protein sequence, read N- to C-terminus: Histidine ammonia-lyase (508 aa).

Positions 143–145 form a cross-link, 5-imidazolinone (Ala-Gly); that stretch reads ASG. The residue at position 144 (S144) is a 2,3-didehydroalanine (Ser).

It belongs to the PAL/histidase family. Contains an active site 4-methylidene-imidazol-5-one (MIO), which is formed autocatalytically by cyclization and dehydration of residues Ala-Ser-Gly.

It is found in the cytoplasm. The enzyme catalyses L-histidine = trans-urocanate + NH4(+). Its pathway is amino-acid degradation; L-histidine degradation into L-glutamate; N-formimidoyl-L-glutamate from L-histidine: step 1/3. This Klebsiella pneumoniae subsp. pneumoniae (strain ATCC 700721 / MGH 78578) protein is Histidine ammonia-lyase.